A 540-amino-acid polypeptide reads, in one-letter code: Chaperonin GroEL (540 aa).

Residues 30–33 (TLGP), Lys51, 87–91 (DGTTT), Gly415, and Asp495 contribute to the ATP site.

Belongs to the chaperonin (HSP60) family. Forms a cylinder of 14 subunits composed of two heptameric rings stacked back-to-back. Interacts with the co-chaperonin GroES.

It is found in the cytoplasm. It carries out the reaction ATP + H2O + a folded polypeptide = ADP + phosphate + an unfolded polypeptide.. In terms of biological role, together with its co-chaperonin GroES, plays an essential role in assisting protein folding. The GroEL-GroES system forms a nano-cage that allows encapsulation of the non-native substrate proteins and provides a physical environment optimized to promote and accelerate protein folding. In Serratia marcescens, this protein is Chaperonin GroEL.